Reading from the N-terminus, the 297-residue chain is Cell division protein FtsX (297 aa).

At 1–24 the chain is on the cytoplasmic side; it reads MKAKTLSRHLREGVKNLSRNGWMT. A helical transmembrane segment spans residues 25–45; it reads FASVSAVTVTLLLVGVFLTAI. At 46–171 the chain is on the extracellular side; sequence MNMNHFATKV…LFDTVKTGRN (126 aa). A helical membrane pass occupies residues 172-192; that stretch reads IGIVLIAGLLFTAMFLISNTI. Topologically, residues 193-219 are cytoplasmic; the sequence is KITIYARSTEIEIMKLVGATNWFIRWP. The helical transmembrane segment at 220-240 threads the bilayer; it reads FLLEGLFLGVLGSIIPIGLIL. Residues 241–270 lie on the Extracellular side of the membrane; the sequence is VTYNSLQGMFNEKLGGTIFELLPYSPFVFQ. A helical transmembrane segment spans residues 271–291; sequence LAGLLVLIGALIGMWGSVMSI. Residues 292–297 lie on the Cytoplasmic side of the membrane; that stretch reads RRFLKV.

The protein belongs to the ABC-4 integral membrane protein family. FtsX subfamily. As to quaternary structure, interacts with FtsE.

The protein resides in the cell membrane. In terms of biological role, part of the ABC transporter FtsEX involved in asymmetric cellular division facilitating the initiation of sporulation. The chain is Cell division protein FtsX from Bacillus anthracis.